Consider the following 421-residue polypeptide: Magnesium transporter MRS2-5 (421 aa).

2 helical membrane passes run 357–377 and 393–413; these read LLLT…AVFG and YVLL…VLYF. Residues 377-379 carry the Required for magnesium transport activity motif; it reads GMN.

This sequence belongs to the CorA metal ion transporter (MIT) (TC 1.A.35.5) family. In terms of tissue distribution, expressed in the whole plant.

It localises to the membrane. Magnesium transporter that may mediate the influx of magnesium. The polypeptide is Magnesium transporter MRS2-5 (MRS2-5) (Arabidopsis thaliana (Mouse-ear cress)).